Here is a 148-residue protein sequence, read N- to C-terminus: Large ribosomal subunit protein uL22c (148 aa).

It belongs to the universal ribosomal protein uL22 family. Part of the 50S ribosomal subunit.

It localises to the plastid. Its subcellular location is the chloroplast. In terms of biological role, this protein binds specifically to 23S rRNA. The globular domain of the protein is located near the polypeptide exit tunnel on the outside of the subunit, while an extended beta-hairpin is found that lines the wall of the exit tunnel in the center of the 70S ribosome. The sequence is that of Large ribosomal subunit protein uL22c (rpl22) from Triticum aestivum (Wheat).